Here is a 502-residue protein sequence, read N- to C-terminus: Exodeoxyribonuclease 7 large subunit (502 aa).

Over residues 474 to 495 the composition is skewed to low complexity; it reads SAPSTTKKSAPKPAAPKAPKTP. Residues 474-502 are disordered; that stretch reads SAPSTTKKSAPKPAAPKAPKTPGEQGSLF.

It belongs to the XseA family. In terms of assembly, heterooligomer composed of large and small subunits.

The protein localises to the cytoplasm. The catalysed reaction is Exonucleolytic cleavage in either 5'- to 3'- or 3'- to 5'-direction to yield nucleoside 5'-phosphates.. In terms of biological role, bidirectionally degrades single-stranded DNA into large acid-insoluble oligonucleotides, which are then degraded further into small acid-soluble oligonucleotides. This is Exodeoxyribonuclease 7 large subunit from Ruegeria sp. (strain TM1040) (Silicibacter sp.).